Here is a 423-residue protein sequence, read N- to C-terminus: GTPase Obg (423 aa).

Positions Met-1–Leu-158 constitute an Obg domain. The region spanning Ala-159–Ser-329 is the OBG-type G domain. GTP is bound by residues Gly-165–Ser-172, Phe-190–Thr-194, Asp-211–Gly-214, Asn-281–Asp-284, and Ser-310–Leu-312. Mg(2+) is bound by residues Ser-172 and Thr-192. Residues Thr-346–Glu-423 form the OCT domain.

The protein belongs to the TRAFAC class OBG-HflX-like GTPase superfamily. OBG GTPase family. In terms of assembly, monomer. Mg(2+) serves as cofactor.

Its subcellular location is the cytoplasm. Its function is as follows. An essential GTPase which binds GTP, GDP and possibly (p)ppGpp with moderate affinity, with high nucleotide exchange rates and a fairly low GTP hydrolysis rate. Plays a role in control of the cell cycle, stress response, ribosome biogenesis and in those bacteria that undergo differentiation, in morphogenesis control. In Thermoanaerobacter pseudethanolicus (strain ATCC 33223 / 39E) (Clostridium thermohydrosulfuricum), this protein is GTPase Obg.